An 873-amino-acid polypeptide reads, in one-letter code: Zinc fingers and homeoboxes protein 1 (873 aa).

Residues 1–63 are disordered; it reads MASRRKSTTP…ESVDSDNQQN (63 aa). Residues 18 to 30 show a composition bias toward acidic residues; sequence QDPDLELISDLDE. Thr36 bears the Phosphothreonine mark. A phosphoserine mark is found at Ser45, Ser47, and Ser48. 2 consecutive C2H2-type zinc fingers follow at residues 70–93 and 102–125; these read YECK…DSEH and YVCV…LKYH. A Glycyl lysine isopeptide (Lys-Gly) (interchain with G-Cter in SUMO2) cross-link involves residue Lys159. The residue at position 202 (Ser202) is a Phosphoserine. The tract at residues 202–236 is disordered; sequence SVEDVPEEKENEIKPDREEIVENPSSSASESNTST. The span at 212-221 shows a compositional bias: basic and acidic residues; that stretch reads NEIKPDREEI. The segment covering 223 to 236 has biased composition (low complexity); that stretch reads ENPSSSASESNTST. The required for dimerization stretch occupies residues 272–432; sequence NSNLIPKVLI…QNNVQKSQVP (161 aa). A required for interaction with NFYA region spans residues 272-564; the sequence is NSNLIPKVLI…AQPKQSWNPF (293 aa). Residues 284 to 346 constitute a DNA-binding region (homeobox 1); it reads NSIPTYNAAL…LKHGVSWTPE (63 aa). Glycyl lysine isopeptide (Lys-Gly) (interchain with G-Cter in SUMO2) cross-links involve residues Lys441, Lys454, Lys485, and Lys629. DNA-binding regions (homeobox) lie at residues 464–526 and 569–630; these read SFGI…KSNQ and PQKF…EEKM. 2 disordered regions span residues 626 to 667 and 732 to 769; these read KEEK…ICKK and SSMN…INNW. Phosphoserine is present on Ser648. Residues 660–722 constitute a DNA-binding region (homeobox 4); it reads STGKICKKTP…YAWKNGNLKW (63 aa). Residues 734-768 form a required for nuclear localization region; it reads MNGLSSLRKRGRGRPKGRGRGRPRGRPRGSKRINN. The span at 740–764 shows a compositional bias: basic residues; sequence LRKRGRGRPKGRGRGRPRGRPRGSK. Ser774 is modified (phosphoserine). The segment at residues 777 to 832 is a DNA-binding region (homeobox 5); the sequence is KFKTGTAILKDYYLKHKFLNEQDLDELVNKSHMGYEQVREWFAERQRRSELGIELF. The interval 829–873 is disordered; the sequence is IELFEENEEEDEVIDDQEEDEEETDDSDTWEPPRHVKRKLSKSDD. The span at 831 to 857 shows a compositional bias: acidic residues; it reads LFEENEEEDEVIDDQEEDEEETDDSDT. Positions 831–873 are required for repressor activity; it reads LFEENEEEDEVIDDQEEDEEETDDSDTWEPPRHVKRKLSKSDD. A compositionally biased stretch (basic residues) spans 863 to 873; that stretch reads HVKRKLSKSDD.

It belongs to the ZHX family. As to quaternary structure, forms homodimers. Also forms heterodimers with ZHX3 which is a prerequisite for repressor activity and with ZHX2. Interacts with NFYA. Interacts with ATF7IP.

It is found in the nucleus. In terms of biological role, acts as a transcriptional repressor. The sequence is that of Zinc fingers and homeoboxes protein 1 (ZHX1) from Gorilla gorilla gorilla (Western lowland gorilla).